A 103-amino-acid polypeptide reads, in one-letter code: Cell division protein FtsB (103 aa).

Residues 1 to 3 (MGK) lie on the Cytoplasmic side of the membrane. A helical membrane pass occupies residues 4-21 (LTLLLLAILVWLQYSLWF). Over 22–103 (GKNGIHDYTR…RAQSAGQNNR (82 aa)) the chain is Periplasmic. Residues 31-71 (RVNNDVAAQQATNAKLKARNDQLFAEIDDLNGGQEALEERA) adopt a coiled-coil conformation.

Belongs to the FtsB family. Part of a complex composed of FtsB, FtsL and FtsQ.

It localises to the cell inner membrane. Functionally, essential cell division protein. May link together the upstream cell division proteins, which are predominantly cytoplasmic, with the downstream cell division proteins, which are predominantly periplasmic. This chain is Cell division protein FtsB, found in Escherichia coli O81 (strain ED1a).